A 560-amino-acid chain; its full sequence is uncharacterized protein (560 aa).

The Cytoplasmic portion of the chain corresponds to 1-17 (MEPKRKSGSLAKHDLPQ). The chain crosses the membrane as a helical span at residues 18–38 (FYLLIMLYLAQGIPVGLAFGT). Topologically, residues 39–54 (VPFLLKSLAKETSFTS) are extracellular. A helical transmembrane segment spans residues 55–75 (LGIFSMATYPYSLKIIWSPIV). The Cytoplasmic segment spans residues 76 to 88 (DSLYNKRIGRRRS). The chain crosses the membrane as a helical span at residues 89-109 (WIIPVQFVSGFVLWALGWCIS). Residues 110–139 (QGIIFDGVDDAFHNRGNGTLHSVSIKNLTW) are Extracellular-facing. A helical transmembrane segment spans residues 140–160 (WFGLLVFLCATQDIAVDGWAL). The Cytoplasmic segment spans residues 161 to 172 (TILSKESLSYAS). The chain crosses the membrane as a helical span at residues 173 to 193 (TAQTIGLNIGYFMSFTIFLSL). Over 194–214 (NSSDFANKYFRNIPLDHGFIS) the chain is Extracellular. Residues 215-235 (LGGYMKFSGMLYIVITIYIIF) traverse the membrane as a helical segment. The Cytoplasmic segment spans residues 236–329 (CTKEKPYVEY…KLLEQGFKRE (94 aa)). The chain crosses the membrane as a helical span at residues 330 to 350 (DLAVTVLIDLPFEIIFGYYVV). The Extracellular segment spans residues 351–374 (KWSSDKDPMIRDNRRLRNSTGTNK). A helical transmembrane segment spans residues 375–395 (VIKFLVGDAGVLTPWLWGFLG). The Cytoplasmic segment spans residues 396–421 (RLAAAVLGSYVVKQFPKDGEISTGYF). Residues 422–442 (CLVIFQHLLGSFMNTVQFIGI) traverse the membrane as a helical segment. The Extracellular segment spans residues 443-521 (SAFHTRVADP…LNGTVTILRD (79 aa)). A helical transmembrane segment spans residues 522 to 542 (GYYITNLICIVVGLFLYFGYL). Residues 543-560 (KRKILHLQSLPISSWRCT) are Cytoplasmic-facing.

It is found in the membrane. This is an uncharacterized protein from Saccharomyces cerevisiae (strain ATCC 204508 / S288c) (Baker's yeast).